Reading from the N-terminus, the 297-residue chain is MNKLISLLLVCLVAIALVNADCAIDFDSDTVNSVTSSDWSCLAASNDRVIMQVFSGGYGYTSGIASAVQGAQAAGISTIDLYAFLCNQCSGNSPSSSAIQSIVSQLQNDGVSYNMLWIDVEQCDGCWGDLGDNAAFVQEAVETAQNLGVNVGVYSSIGEWSQTVGNLSGLGVDLWYAHYDNNPSFSDSSFYEFGGWTSPTMKQYAGNGNECGVSVDMNFFGSGTCSASTGSGSGSSSGSSSGSSSGSSSGSGSSSGSGSSSGSSSGSGSGSSSSGSGSGSGSSSGSGSSSGSGSGSS.

An N-terminal signal peptide occupies residues 1 to 20 (MNKLISLLLVCLVAIALVNA). The Ch-type lysozyme domain maps to 24 to 235 (IDFDSDTVNS…SASTGSGSGS (212 aa)). Residues D29, D119, and E121 contribute to the active site. An N-linked (GlcNAc...) asparagine glycan is attached at N166. The tract at residues 231 to 296 (SGSGSSSGSS…GSSSGSGSGS (66 aa)) is S-G-S motif repeats. A disordered region spans residues 231–297 (SGSGSSSGSS…SSSGSGSGSS (67 aa)). Low complexity predominate over residues 234–275 (GSSSGSSSGSSSGSSSGSGSSSGSGSSSGSSSGSGSGSSSSG). The segment covering 276-297 (SGSGSGSSSGSGSSSGSGSGSS) has biased composition (gly residues).

It belongs to the glycosyl hydrolase 25 family. As to quaternary structure, monomer. Component of the counting factor (CF) complex, which includes cf60, cf50, cf45-1 and ctnA.

Its subcellular location is the secreted. Cell-counting factor that limits the maximum size of the multicellular structure during aggregation. The polypeptide is Counting factor 45-1 (cf45-1) (Dictyostelium discoideum (Social amoeba)).